A 50-amino-acid polypeptide reads, in one-letter code: Large ribosomal subunit protein bL33B (50 aa).

This sequence belongs to the bacterial ribosomal protein bL33 family.

In Metamycoplasma arthritidis (strain 158L3-1) (Mycoplasma arthritidis), this protein is Large ribosomal subunit protein bL33B.